Here is an 839-residue protein sequence, read N- to C-terminus: Taste receptor type 1 member 2 (839 aa).

Residues 1 to 19 (MRPRATTICSLFFLLRVLA) form the signal peptide. Residues 20–566 (EPAKNSDFYL…AFLEWHEAPT (547 aa)) are Extracellular-facing. Asn-84, Asn-127, Asn-248, Asn-292, Asn-312, Asn-368, Asn-428, Asn-487, and Asn-527 each carry an N-linked (GlcNAc...) asparagine glycan. A helical transmembrane segment spans residues 567–587 (IVVALLAALGFLSTLAILVIF). Over 588-602 (WRHFQTPMVRSAGGP) the chain is Cytoplasmic. A helical membrane pass occupies residues 603–623 (MCFLMLTLLLVAYMVVPVYVG). Topologically, residues 624–635 (PPKVSTCFCRQA) are extracellular. Residues 636–656 (LFPLCFTICISCIAVRSFQIV) traverse the membrane as a helical segment. Topologically, residues 657–681 (CVFKMASRFPRAYSYWVRYQGPYVS) are cytoplasmic. A helical transmembrane segment spans residues 682–702 (MAFITVLKMVTVVIGMLATGL). The Extracellular portion of the chain corresponds to 703–727 (NPTTRIDPDDPKIMIVSCNPNYRNS). Residues 728 to 748 (LFFNTGLDLLLSVVGFSFAYM) traverse the membrane as a helical segment. Residues 749-760 (GKELPTNYNEAK) lie on the Cytoplasmic side of the membrane. A helical transmembrane segment spans residues 761–781 (FITLSMTFYFTSSVSLCTFMS). The Extracellular segment spans residues 782 to 784 (AYN). A helical transmembrane segment spans residues 785–805 (GVLVTIMDLLVTVLNLLAISL). Topologically, residues 806 to 839 (GYFGPKCYMILFYPERNTPAYFNSMIQGYTMRRD) are cytoplasmic.

Belongs to the G-protein coupled receptor 3 family. TAS1R subfamily. As to quaternary structure, forms heterodimers with TAS1R3.

The protein resides in the cell membrane. In terms of biological role, putative taste receptor. TAS1R2/TAS1R3 recognizes diverse natural and synthetic sweeteners. This Papio hamadryas (Hamadryas baboon) protein is Taste receptor type 1 member 2 (TAS1R2).